The chain runs to 461 residues: Protein eva-1 (461 aa).

Residues 1–22 (MNMHIVSPVLLLFWFGIIVTDG) form the signal peptide. Positions 55-160 (ACDGERITLS…KYLQMAYGCI (106 aa)) constitute an SUEL-type lectin domain. The helical transmembrane segment at 370 to 390 (VMCIVLAVSMAAIVVLSACII) threads the bilayer. Positions 397–429 (NKDSSRSSRRSRSRRSLETSKLVSSNYGGSITP) are disordered. The span at 415–429 (TSKLVSSNYGGSITP) shows a compositional bias: polar residues.

The protein belongs to the EVA1 family. Interacts with sax-3. Interacts with slt-1. Interacts (via the SUEL-type lectin domain) with madd-4. Interacts (via the transmembrane domain) with unc-40.

It localises to the cell membrane. Functionally, acts as a receptor for slt-1. Required for the guidance of the AVM pioneer axon to the ventral nerve cord. Acts as a unc-40 coreceptor to enhance the sensitivity of unc-40 to the madd-4 midline guidance cue to guide muscle arm extensions (muscle arms) and AVM mechanosensory axons towards the dorsoventral midline. The chain is Protein eva-1 (eva-1) from Caenorhabditis elegans.